We begin with the raw amino-acid sequence, 397 residues long: 3-ketoacyl-CoA thiolase, mitochondrial (397 aa).

The N-terminal 16 residues, 1–16 (MALLRGVFIVAAKRTP), are a transit peptide targeting the mitochondrion; not cleaved. Lys-25 carries the N6-acetyllysine; alternate modification. N6-succinyllysine; alternate is present on Lys-25. N6-succinyllysine is present on Lys-45. The Acyl-thioester intermediate role is filled by Cys-92. Thr-119 is subject to Phosphothreonine. At Ser-121 the chain carries Phosphoserine. Tyr-127 carries the post-translational modification Phosphotyrosine. Thr-136 bears the Phosphothreonine mark. N6-acetyllysine; alternate occurs at positions 137, 143, 158, 171, 191, and 209. 6 positions are modified to N6-succinyllysine; alternate: Lys-137, Lys-143, Lys-158, Lys-171, Lys-191, and Lys-209. N6-succinyllysine is present on residues Lys-211, Lys-212, and Lys-214. The CoA site is built by Arg-224 and Thr-227. Lys-240 bears the N6-succinyllysine mark. Lys-241 bears the N6-acetyllysine mark. Ser-251 serves as a coordination point for CoA. Lys-269 and Lys-270 each carry N6-acetyllysine. N6-acetyllysine; alternate is present on Lys-305. Lys-305 bears the N6-succinyllysine; alternate mark. At Ser-310 the chain carries Phosphoserine. At Lys-312 the chain carries N6-acetyllysine; alternate. At Lys-312 the chain carries N6-succinyllysine; alternate. A Phosphoserine modification is found at Ser-333. At Lys-340 the chain carries N6-acetyllysine. Residue Ser-344 is modified to Phosphoserine. Position 375 is an N6-acetyllysine (Lys-375). Cys-382 acts as the Proton donor/acceptor in catalysis.

The protein belongs to the thiolase-like superfamily. Thiolase family. In terms of assembly, homotetramer. Interacts with BNIP3. As to expression, expressed in liver, brown adipose tissue and heart (at protein level).

Its subcellular location is the mitochondrion. It carries out the reaction an acyl-CoA + acetyl-CoA = a 3-oxoacyl-CoA + CoA. The catalysed reaction is 2 acetyl-CoA = acetoacetyl-CoA + CoA. It catalyses the reaction acetyl-CoA + H2O = acetate + CoA + H(+). The enzyme catalyses propanoyl-CoA + H2O = propanoate + CoA + H(+). It carries out the reaction butanoyl-CoA + H2O = butanoate + CoA + H(+). The catalysed reaction is hexanoyl-CoA + H2O = hexanoate + CoA + H(+). It catalyses the reaction octanoyl-CoA + H2O = octanoate + CoA + H(+). The enzyme catalyses decanoyl-CoA + H2O = decanoate + CoA + H(+). It carries out the reaction dodecanoyl-CoA + H2O = dodecanoate + CoA + H(+). The catalysed reaction is tetradecanoyl-CoA + H2O = tetradecanoate + CoA + H(+). It catalyses the reaction hexadecanoyl-CoA + H2O = hexadecanoate + CoA + H(+). It participates in lipid metabolism; fatty acid beta-oxidation. Its activity is regulated as follows. The 3-oxoacetyl-CoA thiolase activity is inhibited by acetyl-CoA while the acetyl-CoA hydrolase activity is inhibited by acetoacetyl-CoA. In the production of energy from fats, this is one of the enzymes that catalyzes the last step of the mitochondrial beta-oxidation pathway, an aerobic process breaking down fatty acids into acetyl-CoA. Using free coenzyme A/CoA, catalyzes the thiolytic cleavage of medium- to long-chain unbranched 3-oxoacyl-CoAs into acetyl-CoA and a fatty acyl-CoA shortened by two carbon atoms. Also catalyzes the condensation of two acetyl-CoA molecules into acetoacetyl-CoA and could be involved in the production of ketone bodies. Also displays hydrolase activity on various fatty acyl-CoAs. Thereby, could be responsible for the production of acetate in a side reaction to beta-oxidation. Abolishes BNIP3-mediated apoptosis and mitochondrial damage. The polypeptide is 3-ketoacyl-CoA thiolase, mitochondrial (Acaa2) (Rattus norvegicus (Rat)).